The sequence spans 231 residues: Ion-translocating oxidoreductase complex subunit E (231 aa).

The next 6 membrane-spanning stretches (helical) occupy residues 18-38, 39-59, 63-83, 86-106, 125-145, and 182-202; these read ALVQ…ATNA, LGLG…ISTL, TPAE…VSAV, LINA…PLIV, ALSA…MFVL, and PFLL…MLAG.

Belongs to the NqrDE/RnfAE family. As to quaternary structure, the complex is composed of six subunits: RsxA, RsxB, RsxC, RsxD, RsxE and RsxG.

Its subcellular location is the cell inner membrane. In terms of biological role, part of a membrane-bound complex that couples electron transfer with translocation of ions across the membrane. Required to maintain the reduced state of SoxR. The protein is Ion-translocating oxidoreductase complex subunit E of Escherichia coli O6:H1 (strain CFT073 / ATCC 700928 / UPEC).